A 159-amino-acid polypeptide reads, in one-letter code: UPF0699 transmembrane protein YdbS (159 aa).

2 helical membrane-spanning segments follow: residues 22–42 (IIIS…SYYF) and 47–67 (WISG…VFII).

It belongs to the UPF0699 family.

It is found in the cell membrane. This is UPF0699 transmembrane protein YdbS (ydbS) from Bacillus subtilis (strain 168).